The chain runs to 154 residues: Periplasmic nitrate reductase, electron transfer subunit (154 aa).

A signal peptide spans 1–24 (MSMHPALRLLATVLVALGAGPAFT). Positions 27-47 (APRLTGADRPMSEVAAPPLPE) are disordered. The heme c site is built by histidine 68, cysteine 82, cysteine 85, histidine 86, histidine 103, cysteine 122, cysteine 125, and histidine 126.

The protein belongs to the NapB family. As to quaternary structure, component of the periplasmic nitrate reductase NapAB complex composed of NapA and NapB. In terms of processing, binds 2 heme C groups per subunit.

It localises to the periplasm. Functionally, electron transfer subunit of the periplasmic nitrate reductase complex NapAB. Receives electrons from the membrane-anchored tetraheme c-type NapC protein and transfers these to NapA subunit, thus allowing electron flow between membrane and periplasm. Essential for periplasmic nitrate reduction with nitrate as the terminal electron acceptor. The polypeptide is Periplasmic nitrate reductase, electron transfer subunit (Cereibacter sphaeroides (Rhodobacter sphaeroides)).